The following is a 1154-amino-acid chain: Serine-aspartate repeat-containing protein E (1154 aa).

The first 52 residues, 1-52 (MINRDNKKAITKKGMISNRLNKFSIRKYTVGTASILVGTTLIFGLGNQEAKA), serve as a signal peptide directing secretion. The YSIRK-G/S signaling motif signature appears at 23-34 (FSIRKYTVGTAS). The tract at residues 53-606 (AENTSTENAK…GDGTVKPEEK (554 aa)) is ligand binding A region. Residues 54–230 (ENTSTENAKQ…SKEELKNNPE (177 aa)) form a disordered region. Basic and acidic residues predominate over residues 61 to 75 (AKQDDATTSDNKEVV). Low complexity predominate over residues 77 to 90 (ETENNSTTENNSTN). Residues 92–108 (IKKETNTDSQPEAKKES) are compositionally biased toward basic and acidic residues. A compositionally biased stretch (polar residues) spans 118–129 (NNVTATTETKPQ). The span at 130 to 145 (NIEKENVKPSTDKTAT) shows a compositional bias: basic and acidic residues. Positions 166–178 (TTKPSTSEPSTSE) are enriched in low complexity. Positions 179–212 (IQTKPTTPQESTNIENSQPQPTPSKVDNQVTDAT) are enriched in polar residues. Residues 221–230 (SKEELKNNPE) are compositionally biased toward basic and acidic residues. 3 consecutive CNA-B domains span residues 607 to 719 (LYKI…YKEP), 720 to 829 (KYNL…YKTP), and 830 to 940 (KYSL…EEDT). The segment at 904–1129 (VTNTTEDDKD…TGSENNGSNN (226 aa)) is disordered. Acidic residues-rich tracts occupy residues 908–918 (TEDDKDADGGE) and 935–1093 (YFEE…DSDS). An LPXTG sorting signal motif is present at residues 1117-1121 (LPETG). Thr1120 is subject to Pentaglycyl murein peptidoglycan amidated threonine. Residues 1121-1154 (GSENNGSNNATLFGGLFAALGSLLLFGRRKKQNK) constitute a propeptide, removed by sortase.

This sequence belongs to the serine-aspartate repeat-containing protein (SDr) family. As to quaternary structure, interacts with host complement factor H/CFAH (via C-terminus). Interacts with host complement regulator C4BPA.

It is found in the secreted. Its subcellular location is the cell wall. In terms of biological role, cell surface-associated calcium-binding protein which plays an important role in adhesion and pathogenesis. Contributes to the resistance to killing by innate immune components in blood and thus attenuates bacterial clearance by interacting with host complement factor H/CFAH and modulating its activity. Also inhibits bacterial opsonization and killing by interacting with host complement regulator C4BPA and thus inhibiting classical complement pathway activation. The chain is Serine-aspartate repeat-containing protein E (sdrE) from Staphylococcus aureus (strain USA300).